The primary structure comprises 137 residues: Ribonuclease VapC3 (137 aa).

The PINc domain maps to 12-129 (VVVDASAMVD…LTTDERLARA (118 aa)). Residues aspartate 15 and aspartate 105 each contribute to the Mg(2+) site.

This sequence belongs to the PINc/VapC protein family. Mg(2+) is required as a cofactor.

In terms of biological role, toxic component of a type II toxin-antitoxin (TA) system. An RNase. Its toxic effect is neutralized by coexpression with cognate antitoxin VapB3. This Mycobacterium tuberculosis (strain CDC 1551 / Oshkosh) protein is Ribonuclease VapC3.